The chain runs to 346 residues: tRNA N6-adenosine threonylcarbamoyltransferase (346 aa).

Residues histidine 117 and histidine 121 each contribute to the Fe cation site. Substrate is bound by residues 139–143 (VVSGG), aspartate 172, glycine 185, aspartate 189, and asparagine 278. Residue aspartate 307 coordinates Fe cation.

The protein belongs to the KAE1 / TsaD family. May form a heterodimer with TsaB. It depends on Fe(2+) as a cofactor.

The protein localises to the cytoplasm. It carries out the reaction L-threonylcarbamoyladenylate + adenosine(37) in tRNA = N(6)-L-threonylcarbamoyladenosine(37) in tRNA + AMP + H(+). Functionally, required for the formation of a threonylcarbamoyl group on adenosine at position 37 (t(6)A37) in tRNAs that read codons beginning with adenine. Is involved in the transfer of the threonylcarbamoyl moiety of threonylcarbamoyl-AMP (TC-AMP) to the N6 group of A37, together with TsaE and TsaB; this reaction does not require ATP in vitro. TsaD likely plays a direct catalytic role in this reaction. The sequence is that of tRNA N6-adenosine threonylcarbamoyltransferase from Bacillus subtilis (strain 168).